The primary structure comprises 383 residues: ATP phosphoribosyltransferase regulatory subunit (383 aa).

It belongs to the class-II aminoacyl-tRNA synthetase family. HisZ subfamily. In terms of assembly, heteromultimer composed of HisG and HisZ subunits.

The protein resides in the cytoplasm. It functions in the pathway amino-acid biosynthesis; L-histidine biosynthesis; L-histidine from 5-phospho-alpha-D-ribose 1-diphosphate: step 1/9. Required for the first step of histidine biosynthesis. May allow the feedback regulation of ATP phosphoribosyltransferase activity by histidine. The chain is ATP phosphoribosyltransferase regulatory subunit from Cupriavidus taiwanensis (strain DSM 17343 / BCRC 17206 / CCUG 44338 / CIP 107171 / LMG 19424 / R1) (Ralstonia taiwanensis (strain LMG 19424)).